The sequence spans 584 residues: DNA ligase (584 aa).

Glu-249 contacts ATP. Lys-251 functions as the N6-AMP-lysine intermediate in the catalytic mechanism. Residues Arg-256, Arg-271, Glu-301, Phe-341, Arg-416, and Lys-422 each contribute to the ATP site.

The protein belongs to the ATP-dependent DNA ligase family. Mg(2+) serves as cofactor.

It carries out the reaction ATP + (deoxyribonucleotide)n-3'-hydroxyl + 5'-phospho-(deoxyribonucleotide)m = (deoxyribonucleotide)n+m + AMP + diphosphate.. Functionally, DNA ligase that seals nicks in double-stranded DNA during DNA replication, DNA recombination and DNA repair. The polypeptide is DNA ligase (Pyrobaculum arsenaticum (strain DSM 13514 / JCM 11321 / PZ6)).